Reading from the N-terminus, the 285-residue chain is Bifunctional protein FolD (285 aa).

Residues 166 to 168 (GAS), Ser191, and Ile232 contribute to the NADP(+) site.

It belongs to the tetrahydrofolate dehydrogenase/cyclohydrolase family. As to quaternary structure, homodimer.

The enzyme catalyses (6R)-5,10-methylene-5,6,7,8-tetrahydrofolate + NADP(+) = (6R)-5,10-methenyltetrahydrofolate + NADPH. It carries out the reaction (6R)-5,10-methenyltetrahydrofolate + H2O = (6R)-10-formyltetrahydrofolate + H(+). It functions in the pathway one-carbon metabolism; tetrahydrofolate interconversion. In terms of biological role, catalyzes the oxidation of 5,10-methylenetetrahydrofolate to 5,10-methenyltetrahydrofolate and then the hydrolysis of 5,10-methenyltetrahydrofolate to 10-formyltetrahydrofolate. In Edwardsiella ictaluri (strain 93-146), this protein is Bifunctional protein FolD.